Consider the following 792-residue polypeptide: Ribonucleoside-diphosphate reductase large subunit (792 aa).

The region spanning 1–92 (MHVIKRDGRQ…VSNLHKEAKK (92 aa)) is the ATP-cone domain. Residues 5-6 (KR), 11-17 (ERVMFDK), T53, and D57 contribute to the ATP site. Residue K17 is modified to N6-acetyllysine. 2 residues coordinate GDP: S202 and S217. The cysteines at positions 218 and 444 are disulfide-linked. Residues 226–228 (DSI), K243, R256, and 263–264 (AG) each bind dTTP. K376 bears the N6-acetyllysine mark. S427 acts as the Proton acceptor in catalysis. C429 (cysteine radical intermediate) is an active-site residue. Residues E431 and 604–607 (TAST) contribute to the GDP site. E431 functions as the Proton acceptor in the catalytic mechanism. T751 bears the Phosphothreonine mark.

Belongs to the ribonucleoside diphosphate reductase large chain family. Heterodimer of a large and a small subunit. Interacts with RRM2B. Interacts with AHCYL1 which inhibits its activity.

The protein resides in the cytoplasm. The catalysed reaction is a 2'-deoxyribonucleoside 5'-diphosphate + [thioredoxin]-disulfide + H2O = a ribonucleoside 5'-diphosphate + [thioredoxin]-dithiol. With respect to regulation, under complex allosteric control mediated by deoxynucleoside triphosphates and ATP binding to separate specificity and activation sites on the M1 subunit. The type of nucleotide bound at the specificity site determines substrate preference. It seems probable that ATP makes the enzyme reduce CDP and UDP, dGTP favors ADP reduction and dTTP favors GDP reduction. Stimulated by ATP and inhibited by dATP binding to the activity site, the dATP inhibition is mediated by AHCYL1 which stabilizes dATP in the site. In terms of biological role, provides the precursors necessary for DNA synthesis. Catalyzes the biosynthesis of deoxyribonucleotides from the corresponding ribonucleotides. The polypeptide is Ribonucleoside-diphosphate reductase large subunit (RRM1) (Pongo abelii (Sumatran orangutan)).